Here is a 295-residue protein sequence, read N- to C-terminus: 5'-adenylylsulfate reductase-like 6 (295 aa).

The N-terminal stretch at 1–22 is a signal peptide; sequence MEKKLTLLLLVVVVLFVNLTNA. Residues 23-161 enclose the Thioredoxin domain; sequence TVRVQICPRE…LVAFYTDVTG (139 aa). An N-linked (GlcNAc...) asparagine glycan is attached at asparagine 136. Residues 208–228 form a helical membrane-spanning segment; the sequence is ATVFVLLRLLHLISPTMVVFV.

The protein localises to the membrane. The sequence is that of 5'-adenylylsulfate reductase-like 6 (APRL6) from Arabidopsis thaliana (Mouse-ear cress).